Reading from the N-terminus, the 309-residue chain is Probable RuBisCO transcriptional regulator (309 aa).

The HTH lysR-type domain occupies 6–63 (FTLDQLRILKAIVKEGSFKRAADSLYVSQPAISLQIQNLEKQLNIPLFERSNKKATLT). The H-T-H motif DNA-binding region spans 23-42 (FKRAADSLYVSQPAISLQIQ).

It belongs to the LysR transcriptional regulatory family.

It is found in the plastid. Its subcellular location is the chloroplast. In terms of biological role, trans-acting transcriptional regulator of RuBisCO genes (rbcL and rbcS) expression. In Gracilaria tenuistipitata var. liui (Red alga), this protein is Probable RuBisCO transcriptional regulator (rbcR).